Consider the following 174-residue polypeptide: Transmembrane protein 208 (174 aa).

3 helical membrane-spanning segments follow: residues 30–50 (NMAI…FEVT), 54–74 (VFMH…MAFM), and 111–131 (GTLL…LAPI). The interval 151-174 (AQDDNPQVDEKKQKKMDRRMRRMR) is disordered. Residues 163–174 (QKKMDRRMRRMR) are compositionally biased toward basic residues.

The protein belongs to the TMEM208 family. In terms of assembly, interacts with fz. In terms of tissue distribution, expressed in the brain.

It is found in the endoplasmic reticulum membrane. In terms of biological role, may play an important role during development and helps to maintain proper levels of Fz. This chain is Transmembrane protein 208, found in Drosophila melanogaster (Fruit fly).